We begin with the raw amino-acid sequence, 699 residues long: Elongation factor G (699 aa).

Positions 8–283 (EHIRNIGICA…AIVDFLPSPI (276 aa)) constitute a tr-type G domain. GTP-binding positions include 17–24 (AHIDAGKT), 81–85 (DTPGH), and 135–138 (NKMD).

It belongs to the TRAFAC class translation factor GTPase superfamily. Classic translation factor GTPase family. EF-G/EF-2 subfamily.

It localises to the cytoplasm. Its function is as follows. Catalyzes the GTP-dependent ribosomal translocation step during translation elongation. During this step, the ribosome changes from the pre-translocational (PRE) to the post-translocational (POST) state as the newly formed A-site-bound peptidyl-tRNA and P-site-bound deacylated tRNA move to the P and E sites, respectively. Catalyzes the coordinated movement of the two tRNA molecules, the mRNA and conformational changes in the ribosome. This Rickettsia typhi (strain ATCC VR-144 / Wilmington) protein is Elongation factor G.